The sequence spans 559 residues: Asparagine--tRNA ligase, cytoplasmic (559 aa).

S72 carries the post-translational modification Phosphoserine. N6-acetyllysine occurs at positions 255 and 501.

Belongs to the class-II aminoacyl-tRNA synthetase family.

It is found in the cytoplasm. It catalyses the reaction tRNA(Asn) + L-asparagine + ATP = L-asparaginyl-tRNA(Asn) + AMP + diphosphate + H(+). The chain is Asparagine--tRNA ligase, cytoplasmic (NARS) from Bos taurus (Bovine).